We begin with the raw amino-acid sequence, 366 residues long: tRNA/tmRNA (uracil-C(5))-methyltransferase (366 aa).

Residues glutamine 190, tyrosine 218, asparagine 223, glutamate 239, and aspartate 299 each coordinate S-adenosyl-L-methionine. Cysteine 324 (nucleophile) is an active-site residue. Glutamate 358 (proton acceptor) is an active-site residue.

This sequence belongs to the class I-like SAM-binding methyltransferase superfamily. RNA M5U methyltransferase family. TrmA subfamily.

It catalyses the reaction uridine(54) in tRNA + S-adenosyl-L-methionine = 5-methyluridine(54) in tRNA + S-adenosyl-L-homocysteine + H(+). The catalysed reaction is uridine(341) in tmRNA + S-adenosyl-L-methionine = 5-methyluridine(341) in tmRNA + S-adenosyl-L-homocysteine + H(+). Functionally, dual-specificity methyltransferase that catalyzes the formation of 5-methyluridine at position 54 (m5U54) in all tRNAs, and that of position 341 (m5U341) in tmRNA (transfer-mRNA). The polypeptide is tRNA/tmRNA (uracil-C(5))-methyltransferase (Klebsiella pneumoniae (strain 342)).